The sequence spans 164 residues: Phosphopantetheine adenylyltransferase (164 aa).

A substrate-binding site is contributed by Ser9. Residues 9–10 and His17 each bind ATP; that span reads SF. Residues Lys41, Leu73, and Lys87 each coordinate substrate. Residues 88 to 90, Glu98, and 123 to 129 each bind ATP; these read GLR and NSFLSSS.

This sequence belongs to the bacterial CoaD family. In terms of assembly, homohexamer. Mg(2+) is required as a cofactor.

It localises to the cytoplasm. The enzyme catalyses (R)-4'-phosphopantetheine + ATP + H(+) = 3'-dephospho-CoA + diphosphate. It participates in cofactor biosynthesis; coenzyme A biosynthesis; CoA from (R)-pantothenate: step 4/5. Reversibly transfers an adenylyl group from ATP to 4'-phosphopantetheine, yielding dephospho-CoA (dPCoA) and pyrophosphate. This is Phosphopantetheine adenylyltransferase from Clostridium kluyveri (strain ATCC 8527 / DSM 555 / NBRC 12016 / NCIMB 10680 / K1).